We begin with the raw amino-acid sequence, 283 residues long: Coiled-coil domain-containing protein 107 (283 aa).

Positions 1 to 24 (MAGAVSLLGVVGLLLVSALSGVLG) are cleaved as a signal peptide. Residues 30 to 62 (DLRAHPGNAAHPGSGATEPRRRPPLKDQRERTR) form a disordered region. The span at 47–62 (EPRRRPPLKDQRERTR) shows a compositional bias: basic and acidic residues. Residues 65-85 (SLPLGALYTAAVAAFVLYKCL) form a helical membrane-spanning segment. Residues 104-134 (LQSEQQLAQLTQQLAQTEQHLNNLMAQLDPL) are a coiled coil. Disordered stretches follow at residues 164 to 207 (KPDK…SRPL) and 258 to 283 (AKGP…SLFS). The segment covering 176 to 187 (EGSGGESAGGGD) has biased composition (gly residues).

The protein localises to the membrane. This Homo sapiens (Human) protein is Coiled-coil domain-containing protein 107 (CCDC107).